We begin with the raw amino-acid sequence, 92 residues long: Small ribosomal subunit protein uS19 (92 aa).

It belongs to the universal ribosomal protein uS19 family.

In terms of biological role, protein S19 forms a complex with S13 that binds strongly to the 16S ribosomal RNA. The polypeptide is Small ribosomal subunit protein uS19 (Neisseria meningitidis serogroup C (strain 053442)).